The primary structure comprises 281 residues: Phosphate import ATP-binding protein PstB (281 aa).

Residues 33 to 276 (FKIENLSLWY…PQLKRTRDYI (244 aa)) enclose the ABC transporter domain. ATP is bound at residue 67–74 (GPSGCGKS).

This sequence belongs to the ABC transporter superfamily. Phosphate importer (TC 3.A.1.7) family. In terms of assembly, the complex is composed of two ATP-binding proteins (PstB), two transmembrane proteins (PstC and PstA) and a solute-binding protein (PstS).

Its subcellular location is the cell membrane. It catalyses the reaction phosphate(out) + ATP + H2O = ADP + 2 phosphate(in) + H(+). Its function is as follows. Part of the ABC transporter complex PstSACB involved in phosphate import. Responsible for energy coupling to the transport system. This is Phosphate import ATP-binding protein PstB from Mycoplasma mobile (strain ATCC 43663 / 163K / NCTC 11711) (Mesomycoplasma mobile).